A 971-amino-acid chain; its full sequence is Reversion-inducing cysteine-rich protein with Kazal motifs (971 aa).

An N-terminal signal peptide occupies residues 1-22; that stretch reads MASVRASPRSALLLLLAAAGVA. One copy of the Knot 1 repeat lies at 37–84; sequence CCNHSKDNQMCRDVCEQIFSSKSESRLKHLLQRAPDYCPETMVEIWSC. The segment at 37-338 is 5 X Knot repeats; it reads CCNHSKDNQM…NPVEVSMLTC (302 aa). N39 and N86 each carry an N-linked (GlcNAc...) asparagine glycan. Knot repeat units lie at residues 104–141 and 151–197; these read CCEL…LFSC and CCSY…LIHC. An N-linked (GlcNAc...) asparagine glycan is attached at N200. Knot repeat units follow at residues 216–263 and 292–338; these read CCDR…LWQC and CCSK…MLTC. N-linked (GlcNAc...) asparagine glycans are attached at residues N297 and N352. Kazal-like domains lie at 627 to 673, 698 to 752, and 753 to 789; these read TFTG…PCIS, TFDK…PCQP, and FCRA…PCQA. 6 disulfide bridges follow: C633–C658, C635–C654, C643–C671, C716–C735, C724–C750, and C761–C787. A Kazal-like 2; degenerate domain is found at 704-750; that stretch reads CSQYECVPRQLTCDQARDPVCDTDHMEHSNLCTLYQRGKSLSYRGPC. S942 is lipidated: GPI-anchor amidated serine. Residues 943–971 constitute a propeptide, removed in mature form; that stretch reads SAVVGRPLFHSLLLLLSLGLTVHLLWTRP.

It belongs to the RECK family. As to quaternary structure, interacts (via knot repeats) with WNT7A (via disordered linker region); the interaction is direct. Interacts (via knot repeats) with WNT7B (via disordered linker region); the interaction is direct. Interacts with ADGRA2; the interaction is direct. Interacts with MMP9.

The protein localises to the cell membrane. Its function is as follows. Functions together with ADGRA2 to enable brain endothelial cells to selectively respond to Wnt7 signals (WNT7A or WNT7B). Plays a key role in Wnt7-specific responses: required for central nervous system (CNS) angiogenesis and blood-brain barrier regulation. Acts as a Wnt7-specific coactivator of canonical Wnt signaling by decoding Wnt ligands: acts by interacting specifically with the disordered linker region of Wnt7, thereby conferring ligand selectivity for Wnt7. ADGRA2 is then required to deliver RECK-bound Wnt7 to frizzled by assembling a higher-order RECK-ADGRA2-Fzd-LRP5-LRP6 complex. Also acts as a serine protease inhibitor: negatively regulates matrix metalloproteinase-9 (MMP9) by suppressing MMP9 secretion and by direct inhibition of its enzymatic activity. Also inhibits metalloproteinase activity of MMP2 and MMP14 (MT1-MMP). This is Reversion-inducing cysteine-rich protein with Kazal motifs from Mus musculus (Mouse).